Consider the following 261-residue polypeptide: Taurine import ATP-binding protein TauB (261 aa).

Residues 4 to 233 form the ABC transporter domain; sequence LTADRVSVRY…RWRAGDSARA (230 aa). 38-45 provides a ligand contact to ATP; that stretch reads GPSGCGKT.

This sequence belongs to the ABC transporter superfamily. Taurine importer (TC 3.A.1.17.1) family. In terms of assembly, the complex is composed of two ATP-binding proteins (TauB), two transmembrane proteins (TauC) and a solute-binding protein (TauA).

It is found in the cell inner membrane. The catalysed reaction is taurine(out) + ATP + H2O = taurine(in) + ADP + phosphate + H(+). Part of the ABC transporter complex TauABC involved in taurine import. Responsible for energy coupling to the transport system. This Chromobacterium violaceum (strain ATCC 12472 / DSM 30191 / JCM 1249 / CCUG 213 / NBRC 12614 / NCIMB 9131 / NCTC 9757 / MK) protein is Taurine import ATP-binding protein TauB.